Consider the following 70-residue polypeptide: Large ribosomal subunit protein bL31 (70 aa).

Positions 16, 18, 37, and 40 each coordinate Zn(2+).

Belongs to the bacterial ribosomal protein bL31 family. Type A subfamily. As to quaternary structure, part of the 50S ribosomal subunit. It depends on Zn(2+) as a cofactor.

Binds the 23S rRNA. This chain is Large ribosomal subunit protein bL31, found in Shewanella oneidensis (strain ATCC 700550 / JCM 31522 / CIP 106686 / LMG 19005 / NCIMB 14063 / MR-1).